We begin with the raw amino-acid sequence, 615 residues long: DNA mismatch repair protein MutL (615 aa).

Positions 363-397 (FAEPAAREPVAPRYTPAPASGSRPAAPWPNAQPGY) are disordered. Low complexity predominate over residues 364-391 (AEPAAREPVAPRYTPAPASGSRPAAPWP).

Belongs to the DNA mismatch repair MutL/HexB family.

This protein is involved in the repair of mismatches in DNA. It is required for dam-dependent methyl-directed DNA mismatch repair. May act as a 'molecular matchmaker', a protein that promotes the formation of a stable complex between two or more DNA-binding proteins in an ATP-dependent manner without itself being part of a final effector complex. The sequence is that of DNA mismatch repair protein MutL from Shigella boydii serotype 4 (strain Sb227).